Consider the following 52-residue polypeptide: MVEERKLYICMRCGRTFSRSEMEILPGIRCPYCNFKIIMKVRSPTVKRIPAV.

Zn(2+) is bound by residues Cys13, Cys30, and Cys33.

It belongs to the archaeal Rpo12/eukaryotic RPC10 RNA polymerase subunit family. In terms of assembly, part of the RNA polymerase complex. The cofactor is Zn(2+).

It localises to the cytoplasm. It carries out the reaction RNA(n) + a ribonucleoside 5'-triphosphate = RNA(n+1) + diphosphate. Its function is as follows. DNA-dependent RNA polymerase (RNAP) catalyzes the transcription of DNA into RNA using the four ribonucleoside triphosphates as substrates. This chain is DNA-directed RNA polymerase subunit Rpo12, found in Pyrobaculum arsenaticum (strain DSM 13514 / JCM 11321 / PZ6).